The following is a 572-amino-acid chain: MEYWKHTNHRKDAGNELETSMATHGNKLTNKITYILWTIILVLLSIVLIIVLINSIKSEKAHESLLQDINNEFMEITEKIQMASDNTNDLIQSGVNTRLLTIQSHVQNYIPISLTQQMSDLRKFISEIIIRNDNQEVPPQRITHDVGIKPLNPDDFWRCTSGLPSLMKTPKIRLMPGPGLLTMPTTVDGCVRTPSLVINDLIYAYTSNLITRGCQDIGKSYQVLQIGIITVNSDLVPDLNPRISHTFNINDNRKSCSLALLNTDVYQLCSTPKVDERSDYASSGIEDIVLDIVNYDGSISTTRFKNNNISFDQPYAALYPSVGPGIYYKGKIIFLGYGGLEHPINENVICNTTGCPGKTQRDCNQASHSPWFSDRRMVNSIIVVDKGLNSIPKLKVWTISMRQNYWGSEGRLLLLGNKIYIYTRSTSWHSKLQLGIIDITDYSDIRIKWTWHNVLSRPGNNECPWGHSCPDGCITGVYTDAYPLNPTGSIVSSVILDSQKSRVNPVITYSTATERVNELAIRNKTLSAGYTTTSCITHYNKGYCFHIVEINHKSLDTFQPMLFKTEVPKSCS.

Over 1–31 (MEYWKHTNHRKDAGNELETSMATHGNKLTNK) the chain is Intravirion. The helical transmembrane segment at 32–52 (ITYILWTIILVLLSIVLIIVL) threads the bilayer. Over 53 to 572 (INSIKSEKAH…FKTEVPKSCS (520 aa)) the chain is Virion surface. Cystine bridges form between Cys-190–Cys-214 and Cys-256–Cys-269. Positions 252–257 (NRKSCS) are involved in neuraminidase activity. 2 N-linked (GlcNAc...) asparagine; by host glycosylation sites follow: Asn-308 and Asn-351. 2 cysteine pairs are disulfide-bonded: Cys-355–Cys-469 and Cys-463–Cys-473. A glycan (N-linked (GlcNAc...) asparagine; by host) is linked at Asn-523. A disulfide bond links Cys-535 and Cys-544.

This sequence belongs to the paramyxoviruses hemagglutinin-neuraminidase family. In terms of assembly, homotetramer; composed of disulfide-linked homodimers. Interacts with F protein trimer.

The protein localises to the virion membrane. It is found in the host cell membrane. It carries out the reaction Hydrolysis of alpha-(2-&gt;3)-, alpha-(2-&gt;6)-, alpha-(2-&gt;8)- glycosidic linkages of terminal sialic acid residues in oligosaccharides, glycoproteins, glycolipids, colominic acid and synthetic substrates.. Its function is as follows. Attaches the virus to sialic acid-containing cell receptors and thereby initiating infection. Binding of HN protein to the receptor induces a conformational change that allows the F protein to trigger virion/cell membranes fusion. Functionally, neuraminidase activity ensures the efficient spread of the virus by dissociating the mature virions from the neuraminic acid containing glycoproteins. This Human parainfluenza 3 virus (strain Tex/9305/82) (HPIV-3) protein is Hemagglutinin-neuraminidase (HN).